The following is a 309-amino-acid chain: Carbamate kinase (309 aa).

Belongs to the carbamate kinase family.

It localises to the cytoplasm. The catalysed reaction is hydrogencarbonate + NH4(+) + ATP = carbamoyl phosphate + ADP + H2O + H(+). The protein operates within metabolic intermediate metabolism; carbamoyl phosphate degradation; CO(2) and NH(3) from carbamoyl phosphate: step 1/1. This Staphylococcus haemolyticus (strain JCSC1435) protein is Carbamate kinase (arcC).